The chain runs to 145 residues: Large-conductance mechanosensitive channel (145 aa).

The next 2 helical transmembrane spans lie at 14–34 and 83–103; these read VIDL…VNSL and GAFL…FLLV.

Belongs to the MscL family. As to quaternary structure, homopentamer.

Its subcellular location is the cell inner membrane. Channel that opens in response to stretch forces in the membrane lipid bilayer. May participate in the regulation of osmotic pressure changes within the cell. This is Large-conductance mechanosensitive channel from Paracoccus denitrificans (strain Pd 1222).